A 281-amino-acid polypeptide reads, in one-letter code: D-arabinitol 2-dehydrogenase [ribulose-forming] (281 aa).

Positions 31 and 52 each coordinate NADP(+). The Proton donor role is filled by S169. The NADP(+) site is built by Y184, K188, I217, and T219. The active-site Proton acceptor is Y184. K188 (lowers pKa of active site Tyr) is an active-site residue.

It belongs to the short-chain dehydrogenases/reductases (SDR) family.

The enzyme catalyses D-arabinitol + NAD(+) = D-ribulose + NADH + H(+). It participates in carbohydrate metabolism; D-arabinitol metabolism. This is D-arabinitol 2-dehydrogenase [ribulose-forming] (ARD1) from Candida albicans (strain WO-1) (Yeast).